A 156-amino-acid chain; its full sequence is Small ribosomal subunit protein uS7 (156 aa).

Belongs to the universal ribosomal protein uS7 family. As to quaternary structure, part of the 30S ribosomal subunit. Contacts proteins S9 and S11.

Its function is as follows. One of the primary rRNA binding proteins, it binds directly to 16S rRNA where it nucleates assembly of the head domain of the 30S subunit. Is located at the subunit interface close to the decoding center, probably blocks exit of the E-site tRNA. The protein is Small ribosomal subunit protein uS7 of Anaeromyxobacter sp. (strain Fw109-5).